The sequence spans 95 residues: Aspartyl/glutamyl-tRNA(Asn/Gln) amidotransferase subunit C (95 aa).

Belongs to the GatC family. Heterotrimer of A, B and C subunits.

The catalysed reaction is L-glutamyl-tRNA(Gln) + L-glutamine + ATP + H2O = L-glutaminyl-tRNA(Gln) + L-glutamate + ADP + phosphate + H(+). It catalyses the reaction L-aspartyl-tRNA(Asn) + L-glutamine + ATP + H2O = L-asparaginyl-tRNA(Asn) + L-glutamate + ADP + phosphate + 2 H(+). In terms of biological role, allows the formation of correctly charged Asn-tRNA(Asn) or Gln-tRNA(Gln) through the transamidation of misacylated Asp-tRNA(Asn) or Glu-tRNA(Gln) in organisms which lack either or both of asparaginyl-tRNA or glutaminyl-tRNA synthetases. The reaction takes place in the presence of glutamine and ATP through an activated phospho-Asp-tRNA(Asn) or phospho-Glu-tRNA(Gln). The chain is Aspartyl/glutamyl-tRNA(Asn/Gln) amidotransferase subunit C from Thermoanaerobacter pseudethanolicus (strain ATCC 33223 / 39E) (Clostridium thermohydrosulfuricum).